The following is a 118-amino-acid chain: UPF0058 protein MJ1132 (118 aa).

It belongs to the UPF0058 family.

The sequence is that of UPF0058 protein MJ1132 from Methanocaldococcus jannaschii (strain ATCC 43067 / DSM 2661 / JAL-1 / JCM 10045 / NBRC 100440) (Methanococcus jannaschii).